The following is a 676-amino-acid chain: UvrABC system protein B (676 aa).

One can recognise a Helicase ATP-binding domain in the interval Q35–R192. ATP is bound at residue G48 to T55. Positions Y101–V124 match the Beta-hairpin motif. The region spanning Q439–I605 is the Helicase C-terminal domain. The UVR domain maps to A634–R669.

The protein belongs to the UvrB family. Forms a heterotetramer with UvrA during the search for lesions. Interacts with UvrC in an incision complex.

The protein localises to the cytoplasm. Its function is as follows. The UvrABC repair system catalyzes the recognition and processing of DNA lesions. A damage recognition complex composed of 2 UvrA and 2 UvrB subunits scans DNA for abnormalities. Upon binding of the UvrA(2)B(2) complex to a putative damaged site, the DNA wraps around one UvrB monomer. DNA wrap is dependent on ATP binding by UvrB and probably causes local melting of the DNA helix, facilitating insertion of UvrB beta-hairpin between the DNA strands. Then UvrB probes one DNA strand for the presence of a lesion. If a lesion is found the UvrA subunits dissociate and the UvrB-DNA preincision complex is formed. This complex is subsequently bound by UvrC and the second UvrB is released. If no lesion is found, the DNA wraps around the other UvrB subunit that will check the other stand for damage. The polypeptide is UvrABC system protein B (Bordetella avium (strain 197N)).